A 329-amino-acid polypeptide reads, in one-letter code: Tryptophan--tRNA ligase (329 aa).

Residues 9–11 and 17–18 contribute to the ATP site; these read QPS and GN. Positions 10 to 18 match the 'HIGH' region motif; the sequence is PSGIPTIGN. D133 serves as a coordination point for L-tryptophan. Residues 145–147, V184, and 193–197 each bind ATP; these read GDD and KMSKS. The short motif at 193-197 is the 'KMSKS' region element; sequence KMSKS.

Belongs to the class-I aminoacyl-tRNA synthetase family. Homodimer.

It localises to the cytoplasm. The catalysed reaction is tRNA(Trp) + L-tryptophan + ATP = L-tryptophyl-tRNA(Trp) + AMP + diphosphate + H(+). Catalyzes the attachment of tryptophan to tRNA(Trp). The chain is Tryptophan--tRNA ligase from Staphylococcus aureus (strain MRSA252).